Reading from the N-terminus, the 253-residue chain is 7-carboxy-7-deazaguanine synthase (253 aa).

Substrate contacts are provided by residues W12–G14 and R32. The Radical SAM core domain maps to A23–L253. Positions 36, 40, and 43 each coordinate [4Fe-4S] cluster. S45 contributes to the Mg(2+) binding site. Substrate is bound at residue T98. Position 100 (G100) interacts with S-adenosyl-L-methionine.

This sequence belongs to the radical SAM superfamily. 7-carboxy-7-deazaguanine synthase family. Homodimer. It depends on [4Fe-4S] cluster as a cofactor. S-adenosyl-L-methionine serves as cofactor. Requires Mg(2+) as cofactor.

The enzyme catalyses 6-carboxy-5,6,7,8-tetrahydropterin + H(+) = 7-carboxy-7-deazaguanine + NH4(+). The protein operates within purine metabolism; 7-cyano-7-deazaguanine biosynthesis. Catalyzes the complex heterocyclic radical-mediated conversion of 6-carboxy-5,6,7,8-tetrahydropterin (CPH4) to 7-carboxy-7-deazaguanine (CDG), a step common to the biosynthetic pathways of all 7-deazapurine-containing compounds. This chain is 7-carboxy-7-deazaguanine synthase, found in Thermococcus kodakarensis (strain ATCC BAA-918 / JCM 12380 / KOD1) (Pyrococcus kodakaraensis (strain KOD1)).